A 300-amino-acid polypeptide reads, in one-letter code: TLR adapter interacting with SLC15A4 on the lysosome (300 aa).

The pLxIS motif signature appears at 289–293 (SLHIS). The residue at position 293 (Ser-293) is a Phosphoserine.

As to quaternary structure, interacts (via pLxIS motif) with IRF5; leading to IRF5 activation. Interacts with SLC15A4; leading to its recruitment to endolysosome. The phosphorylated pLxIS motif constitutes an IRF5-binding motif, leading to recruitment of the transcription factor IRF5 to induce type-I interferons and other cytokines.

The protein localises to the lysosome membrane. It localises to the endosome membrane. It is found in the nucleus. The protein resides in the cytoplasm. Innate immune adapter that mediates the recruitment and activation of IRF5 downstream of endolysosomal toll-like receptors TLR7, TLR8 and TLR9. Following recruitment to endolysosome by SLC15A4 downstream of TLR7, TLR8 and TLR9, specifically recruits IRF5 transcription factor via its pLxIS motif, leading to IRF5 activation and subsequent expression of type I interferons. Plays a role in the regulation of endolysosomal pH in immune cells such as B-cells, dendritic cells and monocytes. In Bos taurus (Bovine), this protein is TLR adapter interacting with SLC15A4 on the lysosome.